The chain runs to 252 residues: 3-dehydroquinate dehydratase (252 aa).

Residues 46–48 and Arg82 contribute to the 3-dehydroquinate site; that span reads EWR. Catalysis depends on His143, which acts as the Proton donor/acceptor. Residue Lys170 is the Schiff-base intermediate with substrate of the active site. Residues Arg212, Ser231, and Gln235 each contribute to the 3-dehydroquinate site.

Belongs to the type-I 3-dehydroquinase family. As to quaternary structure, homodimer.

The enzyme catalyses 3-dehydroquinate = 3-dehydroshikimate + H2O. The protein operates within metabolic intermediate biosynthesis; chorismate biosynthesis; chorismate from D-erythrose 4-phosphate and phosphoenolpyruvate: step 3/7. Involved in the third step of the chorismate pathway, which leads to the biosynthesis of aromatic amino acids. Catalyzes the cis-dehydration of 3-dehydroquinate (DHQ) and introduces the first double bond of the aromatic ring to yield 3-dehydroshikimate. The protein is 3-dehydroquinate dehydratase of Listeria innocua serovar 6a (strain ATCC BAA-680 / CLIP 11262).